The primary structure comprises 108 residues: Protein S100-A15A (108 aa).

The EF-hand domain occupies 53-88 (KEPYYVTELFQATDKNRDNQICFDEFLYILGKLVKD). Ca(2+) contacts are provided by Asp66, Asn68, Asp70, Gln72, and Glu77.

The protein belongs to the S-100 family.

The chain is Protein S100-A15A (S100A15A) from Gorilla gorilla gorilla (Western lowland gorilla).